Reading from the N-terminus, the 656-residue chain is Heparan-alpha-glucosaminide N-acetyltransferase (656 aa).

The tract at residues M1–G31 is disordered. Over M1–S185 the chain is Lumenal, vesicle. N-linked (GlcNAc...) asparagine glycosylation is found at N137 and N157. C146 and C455 are joined by a disulfide. The helical transmembrane segment at N186–L206 threads the bilayer. The Cytoplasmic segment spans residues R207–R268. The tract at residues S234–T253 is disordered. Residues S238 and S240 each carry the phosphoserine modification. A Phosphotyrosine modification is found at Y249. The helical transmembrane segment at G269–K289 threads the bilayer. H290 is an active-site residue. Residues H290 to G295 lie on the Lumenal, vesicle side of the membrane. A helical transmembrane segment spans residues L296–L316. The Cytoplasmic segment spans residues S317–R338. Residues S339 to L359 traverse the membrane as a helical segment. Residues S360–P367 lie on the Lumenal, vesicle side of the membrane. The chain crosses the membrane as a helical span at residues G368–W388. At K389–Q413 the chain is on the cytoplasmic side. A helical membrane pass occupies residues W414–P434. At G435–G493 the chain is on the lumenal, vesicle side. Residues V494–L514 traverse the membrane as a helical segment. The Cytoplasmic portion of the chain corresponds to V515 to K522. Residues A523–T543 form a helical membrane-spanning segment. Residues K544–N557 lie on the Lumenal, vesicle side of the membrane. A helical membrane pass occupies residues L558–L578. Residues Y579 to K585 are Cytoplasmic-facing. A helical membrane pass occupies residues G586–G606. Residues H607–K627 are Lumenal, vesicle-facing. Residues E628–Y648 traverse the membrane as a helical segment. The lysosomal targeting region stretch occupies residues V641–I656. Residues K649–I656 are Cytoplasmic-facing.

Homooligomer. Homooligomerization is necessary for enzyme activity. Undergoes intralysosomal proteolytic cleavage; occurs within the end of the first and/or the beginning of the second luminal domain and is essential for the activation of the enzyme. Post-translationally, glycosylated. As to expression, expressed in the retina.

The protein localises to the lysosome membrane. It catalyses the reaction alpha-D-glucosaminyl-[heparan sulfate](n) + acetyl-CoA = N-acetyl-alpha-D-glucosaminyl-[heparan sulfate](n) + CoA + H(+). Lysosomal acetyltransferase that acetylates the non-reducing terminal alpha-glucosamine residue of intralysosomal heparin or heparan sulfate, converting it into a substrate for luminal alpha-N-acetyl glucosaminidase. The sequence is that of Heparan-alpha-glucosaminide N-acetyltransferase (Hgsnat) from Mus musculus (Mouse).